We begin with the raw amino-acid sequence, 593 residues long: Mitoguardin 2 (593 aa).

2 helical membrane passes run 11 to 31 and 42 to 62; these read MIQA…TTFG and PGLR…ALAA. Disordered regions lie at residues 98–134, 150–171, and 197–229; these read PSVK…HSGS, TAAC…TTDG, and VGQR…PESQ. Composition is skewed to low complexity over residues 106 to 116 and 124 to 134; these read SRRVQSPSSKS and SSIEPSKHSGS. Position 132 is a phosphoserine (S132). A compositionally biased stretch (polar residues) spans 205 to 218; sequence STPTPGDSLQNPDT. T206 is subject to Phosphothreonine. Phosphoserine is present on residues S220, S224, and S228. Phosphothreonine is present on T273. S276 and S295 each carry phosphoserine. Positions 292 to 298 match the FFAT motif; the sequence is SFFSATE.

It belongs to the mitoguardin family. Homodimer and heterodimer; forms heterodimers with MIGA1. Interacts with PLD6/MitoPLD. Interacts (via phosphorylated FFAT motif) with MOSPD2. Phosphorylation at Ser-295 of the FFAT motif activates interaction with MOSPD2.

It localises to the mitochondrion outer membrane. Functionally, regulator of mitochondrial fusion. Acts by forming homo- and heterodimers at the mitochondrial outer membrane and facilitating the formation of PLD6/MitoPLD dimers. May act by regulating phospholipid metabolism via PLD6/MitoPLD. The sequence is that of Mitoguardin 2 from Mus musculus (Mouse).